Consider the following 573-residue polypeptide: Solute carrier family 41 member 2 (573 aa).

The Extracellular segment spans residues 1–162 (MTNSKGRSIT…KESSGIMALQ (162 aa)). Ser-136 and Ser-137 each carry phosphoserine. The chain crosses the membrane as a helical span at residues 163-183 (ILVPFLLAGFGTVSAGMVLDI). Topologically, residues 184-195 (VQHWEVFRKVTE) are cytoplasmic. Residues 196-216 (VFILVPALLGLKGNLEMTLAS) form a helical membrane-spanning segment. Over 217–245 (RLSTAVNIGKMDSPIEKWNLIIGNLALKQ) the chain is Extracellular. Residues 246–266 (VQATVVGFLAAVAAIILGWIP) traverse the membrane as a helical segment. Residues 267–282 (EGKYYLDHSILLCSSS) are Cytoplasmic-facing. A helical transmembrane segment spans residues 283 to 303 (VATAFIASLLQGIIMVGVIVG). The Extracellular portion of the chain corresponds to 304–313 (SKKTGINPDN). Residues 314-334 (VATPIAASFGDLITLAILAWI) form a helical membrane-spanning segment. Residues 335–347 (SQGLYSCLETYYY) lie on the Cytoplasmic side of the membrane. The chain crosses the membrane as a helical span at residues 348-368 (ISPLVGVFFLALTPIWIIIAA). The Extracellular segment spans residues 369–376 (KHPATRTV). A helical membrane pass occupies residues 377 to 397 (LHSGWEPVITAMVISSIGGLI). At 398 to 406 (LDTTVSDPN) the chain is on the cytoplasmic side. The helical transmembrane segment at 407–427 (LVGIVVYTPVINGIGGNLVAI) threads the bilayer. Residues 428–469 (QASRISTYLHLHSIPGELPDEPKGCYYPFRTFFGPGVNNKSA) are Extracellular-facing. A helical membrane pass occupies residues 470 to 490 (QVLLLLVIPGHLIFLYTIHLM). Over 491–498 (KSGHTSLT) the chain is Cytoplasmic. Residues 499–519 (IIFIVVYLFAAVLQVFTLLWI) traverse the membrane as a helical segment. At 520-543 (ADWMVHHFWRKGKDPDSFSIPYLT) the chain is on the extracellular side. A helical transmembrane segment spans residues 544–564 (ALGDLLGTALLALSFHFLWLI). Residues 565 to 573 (GDRDGDVGD) are Cytoplasmic-facing.

The protein belongs to the SLC41A transporter family.

It localises to the cell membrane. The enzyme catalyses Mg(2+)(in) = Mg(2+)(out). It catalyses the reaction Mn(2+)(in) = Mn(2+)(out). It carries out the reaction Co(2+)(in) = Co(2+)(out). The catalysed reaction is Ni(2+)(in) = Ni(2+)(out). The enzyme catalyses Fe(2+)(in) = Fe(2+)(out). Functionally, acts as a plasma-membrane magnesium transporter. Can also mediate the transport of other divalent metal cations in an order of Ba(2+) &gt; Ni(2+) &gt; Co(2+) &gt; Fe(2+) &gt; Mn(2+). The protein is Solute carrier family 41 member 2 (SLC41A2) of Macaca fascicularis (Crab-eating macaque).